Here is a 623-residue protein sequence, read N- to C-terminus: Lamin-B2.L (623 aa).

Positions 1–18 (MATTTPSRSTRSSMQSPA) are enriched in low complexity. Residues 1 to 30 (MATTTPSRSTRSSMQSPARGTSTPLSPTRI) form a disordered region. A head region spans residues 2 to 27 (ATTTPSRSTRSSMQSPARGTSTPLSP). The span at 19 to 30 (RGTSTPLSPTRI) shows a compositional bias: polar residues. Residue S26 is modified to Phosphoserine. The segment at 28-64 (TRISRLQEKEELRHLNDRLAVYIDRVRALELENDRLM) is coil 1A. The region spanning 35 to 391 (EKEELRHLND…KLLEGEEERL (357 aa)) is the IF rod domain. The linker 1 stretch occupies residues 64–74 (MVKISEKEEVT). The interval 75–211 (TREVSGIKNL…QSLQEEMDFR (137 aa)) is coil 1B. The tract at residues 212–235 (KNIYEEESRETRKRHERRIVEVDR) is linker 2. Residues 236-378 (GHHYDYESKL…VKLALDLEIN (143 aa)) form a coil 2 region. Positions 380–592 (YRKLLEGEEE…VTKSVLRNVE (213 aa)) are tail. Disordered stretches follow at residues 388–473 (EERL…LSQQ) and 591–623 (VEEE…CSVM). Residue S396 is modified to Phosphoserine. Residues 398-416 (ESRVTVSRATSSSSSATRT) are compositionally biased toward low complexity. The short motif at 420–425 (KRRRVE) is the Nuclear localization signal element. Polar residues predominate over residues 443 to 473 (LGSSRITASEGSSRTITSGQSSTTRFHLSQQ). The LTD domain occupies 468 to 585 (FHLSQQASAT…EEVAVRTVTK (118 aa)). Acidic residues predominate over residues 592-604 (EEEEDEDADFGEE). Polar residues predominate over residues 612–623 (DPRTTSRGCSVM). The residue at position 620 (C620) is a Cysteine methyl ester. A lipid anchor (S-farnesyl cysteine) is attached at C620. A propeptide spans 621-623 (SVM) (removed in mature form).

It belongs to the intermediate filament family. Phosphorylation plays a key role in lamin organization, subcellular localization and nuclear envelope disintegration. Phosphorylation by CDK1 at Ser-26 at the onset of mitosis drives lamin disassembly and nuclear envelope breakdown.

The protein localises to the nucleus lamina. Its subcellular location is the nucleus envelope. It is found in the nucleus. The protein resides in the nucleoplasm. It localises to the nucleus matrix. In terms of biological role, lamins are intermediate filament proteins that assemble into a filamentous meshwork, and which constitute the major components of the nuclear lamina, a fibrous layer on the nucleoplasmic side of the inner nuclear membrane. Lamins provide a framework for the nuclear envelope, bridging the nuclear envelope and chromatin, thereby playing an important role in nuclear assembly, chromatin organization, nuclear membrane and telomere dynamics. The structural integrity of the lamina is strictly controlled by the cell cycle, as seen by the disintegration and formation of the nuclear envelope in prophase and telophase, respectively. In Xenopus laevis (African clawed frog), this protein is Lamin-B2.L (lmnb2.L).